We begin with the raw amino-acid sequence, 126 residues long: C-X-C motif chemokine 9 (126 aa).

Positions 1-21 (MKSAVLFLLGIIFLEQCGVRG) are cleaved as a signal peptide. 2 disulfide bridges follow: C30–C57 and C32–C73. N58 is a glycosylation site (N-linked (GlcNAc...) asparagine). A disordered region spans residues 91 to 126 (KISQKKKQKRGKKHQKNMKNRKPKTPQSRRRSRKTT). The segment covering 93 to 126 (SQKKKQKRGKKHQKNMKNRKPKTPQSRRRSRKTT) has biased composition (basic residues).

This sequence belongs to the intercrine alpha (chemokine CxC) family.

The protein localises to the secreted. May be a cytokine that affects the growth, movement, or activation state of cells that participate in immune and inflammatory response. This is C-X-C motif chemokine 9 (Cxcl9) from Mus musculus (Mouse).